We begin with the raw amino-acid sequence, 500 residues long: Cytochrome P450 71B22 (500 aa).

A helical transmembrane segment spans residues Met1 to Leu21. Position 441 (Cys441) interacts with heme.

The protein belongs to the cytochrome P450 family. Heme serves as cofactor.

Its subcellular location is the membrane. The polypeptide is Cytochrome P450 71B22 (CYP71B22) (Arabidopsis thaliana (Mouse-ear cress)).